Here is a 105-residue protein sequence, read N- to C-terminus: MTQSPFTLEANGLVLAVRLTPRASRTGLDGVRTEASGRPVLSLRVAAPPVEGAANAALTAFVAKSLGLRKAEVTLLSGETSRTKRLLLSGDPQTLAARVEAWLGG.

Belongs to the UPF0235 family.

This Methylorubrum extorquens (strain PA1) (Methylobacterium extorquens) protein is UPF0235 protein Mext_2130.